A 299-amino-acid chain; its full sequence is Ribosomal RNA small subunit methyltransferase H 1 (299 aa).

S-adenosyl-L-methionine-binding positions include 31-33, aspartate 50, phenylalanine 76, aspartate 97, and glutamine 104; that span reads GGH.

The protein belongs to the methyltransferase superfamily. RsmH family.

It is found in the cytoplasm. The catalysed reaction is cytidine(1402) in 16S rRNA + S-adenosyl-L-methionine = N(4)-methylcytidine(1402) in 16S rRNA + S-adenosyl-L-homocysteine + H(+). Functionally, specifically methylates the N4 position of cytidine in position 1402 (C1402) of 16S rRNA. This is Ribosomal RNA small subunit methyltransferase H 1 from Acholeplasma laidlawii (strain PG-8A).